Here is a 78-residue protein sequence, read N- to C-terminus: Large ribosomal subunit protein bL28 (78 aa).

It belongs to the bacterial ribosomal protein bL28 family.

The polypeptide is Large ribosomal subunit protein bL28 (Francisella philomiragia subsp. philomiragia (strain ATCC 25017 / CCUG 19701 / FSC 153 / O#319-036)).